A 96-amino-acid polypeptide reads, in one-letter code: MRKYEIMYIIRPGVEEEAQKALVERFAGVLTNNGAEIINTKEWGKRRLAYEINDLREGFYMILNVNSNAEAINEFDRLAKINEDILRHIVVKEEEK.

It belongs to the bacterial ribosomal protein bS6 family.

Functionally, binds together with bS18 to 16S ribosomal RNA. The chain is Small ribosomal subunit protein bS6 from Bacillus cereus (strain G9842).